Here is a 491-residue protein sequence, read N- to C-terminus: Aspartyl/glutamyl-tRNA(Asn/Gln) amidotransferase subunit B (491 aa).

The protein belongs to the GatB/GatE family. GatB subfamily. In terms of assembly, heterotrimer of A, B and C subunits.

It carries out the reaction L-glutamyl-tRNA(Gln) + L-glutamine + ATP + H2O = L-glutaminyl-tRNA(Gln) + L-glutamate + ADP + phosphate + H(+). It catalyses the reaction L-aspartyl-tRNA(Asn) + L-glutamine + ATP + H2O = L-asparaginyl-tRNA(Asn) + L-glutamate + ADP + phosphate + 2 H(+). Allows the formation of correctly charged Asn-tRNA(Asn) or Gln-tRNA(Gln) through the transamidation of misacylated Asp-tRNA(Asn) or Glu-tRNA(Gln) in organisms which lack either or both of asparaginyl-tRNA or glutaminyl-tRNA synthetases. The reaction takes place in the presence of glutamine and ATP through an activated phospho-Asp-tRNA(Asn) or phospho-Glu-tRNA(Gln). The protein is Aspartyl/glutamyl-tRNA(Asn/Gln) amidotransferase subunit B of Paraburkholderia xenovorans (strain LB400).